Consider the following 429-residue polypeptide: Adenosylhomocysteinase (429 aa).

Substrate-binding residues include T64, D136, and E161. 162–164 (TTT) lines the NAD(+) pocket. 2 residues coordinate substrate: K191 and D195. NAD(+)-binding positions include N196, 225–230 (GYGWCG), E248, N283, 304–306 (SGH), and N351.

The protein belongs to the adenosylhomocysteinase family. Requires NAD(+) as cofactor.

It is found in the cytoplasm. The enzyme catalyses S-adenosyl-L-homocysteine + H2O = L-homocysteine + adenosine. The protein operates within amino-acid biosynthesis; L-homocysteine biosynthesis; L-homocysteine from S-adenosyl-L-homocysteine: step 1/1. May play a key role in the regulation of the intracellular concentration of adenosylhomocysteine. The chain is Adenosylhomocysteinase from Thermosynechococcus vestitus (strain NIES-2133 / IAM M-273 / BP-1).